The sequence spans 179 residues: Archaemetzincin (179 aa).

A Zn(2+)-binding site is contributed by His-128. Residue Glu-129 is the Proton acceptor of the active site. The Zn(2+) site is built by His-132, His-138, Cys-139, Cys-144, Cys-163, and Cys-166.

This sequence belongs to the peptidase M54 family. As to quaternary structure, monomer. Requires Zn(2+) as cofactor.

In terms of biological role, probable zinc metalloprotease whose natural substrate is unknown. This Methanocaldococcus jannaschii (strain ATCC 43067 / DSM 2661 / JAL-1 / JCM 10045 / NBRC 100440) (Methanococcus jannaschii) protein is Archaemetzincin.